The following is a 600-amino-acid chain: Proline--tRNA ligase (600 aa).

This sequence belongs to the class-II aminoacyl-tRNA synthetase family. ProS type 1 subfamily. As to quaternary structure, homodimer.

It is found in the cytoplasm. The catalysed reaction is tRNA(Pro) + L-proline + ATP = L-prolyl-tRNA(Pro) + AMP + diphosphate. Its function is as follows. Catalyzes the attachment of proline to tRNA(Pro) in a two-step reaction: proline is first activated by ATP to form Pro-AMP and then transferred to the acceptor end of tRNA(Pro). As ProRS can inadvertently accommodate and process non-cognate amino acids such as alanine and cysteine, to avoid such errors it has two additional distinct editing activities against alanine. One activity is designated as 'pretransfer' editing and involves the tRNA(Pro)-independent hydrolysis of activated Ala-AMP. The other activity is designated 'posttransfer' editing and involves deacylation of mischarged Ala-tRNA(Pro). The misacylated Cys-tRNA(Pro) is not edited by ProRS. The polypeptide is Proline--tRNA ligase (Gloeothece citriformis (strain PCC 7424) (Cyanothece sp. (strain PCC 7424))).